Reading from the N-terminus, the 683-residue chain is Zinc finger protein 418 (683 aa).

The KRAB domain maps to 48–123 (VTIEDVTVYF…TPKQGQLRQK (76 aa)). Polar residues predominate over residues 102–120 (QSLSQTEAPQVRTPKQGQL). 2 disordered regions span residues 102–124 (QSLS…RQKP) and 209–247 (DIPN…QHRL). Over residues 225-239 (FHRDKNNSESDEYKK) the composition is skewed to basic and acidic residues. 14 C2H2-type zinc fingers span residues 287–309 (YECH…QRRH), 315–337 (YKCG…CRVH), 343–365 (FECL…QRTH), 371–393 (YECS…QRTH), 399–421 (YECG…QRVH), 427–449 (YHCE…SKIH), 455–477 (YECG…QRTH), 483–505 (YECR…RRIH), 511–533 (YECE…QRVH), 539–561 (YKCE…QRTH), 567–589 (YECA…QKIH), 595–617 (YHCD…QRVH), 623–645 (YTCG…RRIH), and 651–673 (YECD…QLLH).

It belongs to the krueppel C2H2-type zinc-finger protein family.

Its subcellular location is the nucleus. Transcriptional repressor. May play a role as regulator of the ubiquitin-proteasome system and autophagy-lysosomal pathway. This is Zinc finger protein 418 from Rattus norvegicus (Rat).